Reading from the N-terminus, the 205-residue chain is Ephrin-A1 (205 aa).

A signal peptide spans 1 to 17 (MEFLWAPLLGLCCSLAA). The 134-residue stretch at 18–151 (ADRHIVFWNS…KLKVTVNGKI (134 aa)) folds into the Ephrin RBD domain. Residue Asn-26 is glycosylated (N-linked (GlcNAc...) asparagine). 2 disulfide bridges follow: Cys-51–Cys-92 and Cys-80–Cys-140. Residue Ser-182 is the site of GPI-anchor amidated serine attachment. Positions 183 to 205 (AAPRLFPLVWAVLLLPLLLLQTQ) are cleaved as a propeptide — removed in mature form.

It belongs to the ephrin family. In terms of assembly, monomer. Homodimer. Forms heterodimers with EPHA2. Binds to the receptor tyrosine kinases EPHA2, EPHA3, EPHA4, EPHA5, EPHA6 and EPHA7. Also binds with low affinity to EPHA1. Post-translationally, undergoes proteolysis by a metalloprotease to give rise to a soluble monomeric form. N-Glycosylation is required for binding to EPHA2 receptor and inducing its internalization.

Its subcellular location is the cell membrane. The protein localises to the secreted. Cell surface GPI-bound ligand for Eph receptors, a family of receptor tyrosine kinases which are crucial for migration, repulsion and adhesion during neuronal, vascular and epithelial development. Binds promiscuously Eph receptors residing on adjacent cells, leading to contact-dependent bidirectional signaling into neighboring cells. Plays an important role in angiogenesis and tumor neovascularization. The recruitment of VAV2, VAV3 and PI3-kinase p85 subunit by phosphorylated EPHA2 is critical for EFNA1-induced RAC1 GTPase activation and vascular endothelial cell migration and assembly. Exerts anti-oncogenic effects in tumor cells through activation and down-regulation of EPHA2. Activates EPHA2 by inducing tyrosine phosphorylation which leads to its internalization and degradation. Acts as a negative regulator in the tumorigenesis of gliomas by down-regulating EPHA2 and FAK. Can evoke collapse of embryonic neuronal growth cone and regulates dendritic spine morphogenesis. The polypeptide is Ephrin-A1 (Efna1) (Rattus norvegicus (Rat)).